A 363-amino-acid chain; its full sequence is sn-glycerol-3-phosphate import ATP-binding protein UgpC (363 aa).

In terms of domain architecture, ABC transporter spans 4 to 235 (VVLRNVRKTY…PATTFVASFI (232 aa)). 37-44 (GPSGCGKS) serves as a coordination point for ATP.

Belongs to the ABC transporter superfamily. sn-glycerol-3-phosphate importer (TC 3.A.1.1.3) family. In terms of assembly, the complex is composed of two ATP-binding proteins (UgpC), two transmembrane proteins (UgpA and UgpE) and a solute-binding protein (UgpB).

The protein resides in the cell inner membrane. The enzyme catalyses sn-glycerol 3-phosphate(out) + ATP + H2O = sn-glycerol 3-phosphate(in) + ADP + phosphate + H(+). In terms of biological role, part of the ABC transporter complex UgpBAEC involved in sn-glycerol-3-phosphate (G3P) import. Responsible for energy coupling to the transport system. This Rhodopseudomonas palustris (strain ATCC BAA-98 / CGA009) protein is sn-glycerol-3-phosphate import ATP-binding protein UgpC.